Consider the following 83-residue polypeptide: U4-theraphotoxin-Hhn1x (83 aa).

The first 20 residues, 1–20, serve as a signal peptide directing secretion; it reads MTLIAILTCAAALVLHTTAA. The propeptide occupies 21 to 46; it reads EELEAESQLMEVGMPDTELEAVDEER. 3 cysteine pairs are disulfide-bonded: cysteine 50/cysteine 64, cysteine 54/cysteine 75, and cysteine 69/cysteine 80.

Belongs to the neurotoxin 12 (Hwtx-2) family. 02 (Hwtx-2) subfamily. Expressed by the venom gland.

Its subcellular location is the secreted. Functionally, postsynaptic neurotoxin. The chain is U4-theraphotoxin-Hhn1x from Cyriopagopus hainanus (Chinese bird spider).